Consider the following 220-residue polypeptide: Ribosomal RNA small subunit methyltransferase G (220 aa).

S-adenosyl-L-methionine contacts are provided by residues glycine 82, leucine 87, 137 to 138 (VE), and arginine 152.

This sequence belongs to the methyltransferase superfamily. RNA methyltransferase RsmG family.

The protein localises to the cytoplasm. It catalyses the reaction guanosine(527) in 16S rRNA + S-adenosyl-L-methionine = N(7)-methylguanosine(527) in 16S rRNA + S-adenosyl-L-homocysteine. Its function is as follows. Specifically methylates the N7 position of guanine in position 527 of 16S rRNA. In Janthinobacterium sp. (strain Marseille) (Minibacterium massiliensis), this protein is Ribosomal RNA small subunit methyltransferase G.